A 349-amino-acid polypeptide reads, in one-letter code: Probable ethanolamine kinase (349 aa).

The protein belongs to the choline/ethanolamine kinase family.

Its subcellular location is the cytoplasm. The enzyme catalyses ethanolamine + ATP = phosphoethanolamine + ADP + H(+). Its pathway is phospholipid metabolism; phosphatidylethanolamine biosynthesis; phosphatidylethanolamine from ethanolamine: step 1/3. Highly specific for ethanolamine phosphorylation. May be a rate-controlling step in phosphatidylethanolamine biosynthesis. In Nematostella vectensis (Starlet sea anemone), this protein is Probable ethanolamine kinase (etnk).